The primary structure comprises 3106 residues: Probable polyketide synthase 29 (3106 aa).

Over residues 1 to 11 (MVQNTDNTRNS) the composition is skewed to polar residues. The tract at residues 1–20 (MVQNTDNTRNSKLIRDRNDY) is disordered. Residues 28–461 (SGDIAVIGIG…GSNVCLILSE (434 aa)) enclose the Ketosynthase family 3 (KS3) domain. Residues Cys-200, His-339, and His-384 each act as for beta-ketoacyl synthase activity in the active site. The interval 661-694 (GVSADIIIGHSLGEVSSPYCSGMIDFQTLCYLTY) is acyl/malonyl transferase. Ser-671 serves as the catalytic For acyl/malonyl transferase activity. An N-terminal hotdog fold region spans residues 961–1082 (PSIHGLGNNT…GNFSLTKHNS (122 aa)). A PKS/mFAS DH domain is found at 961–1266 (PSIHGLGNNT…CALVSLDSNP (306 aa)). His-994 acts as the Proton acceptor; for dehydratase activity in catalysis. The interval 1099–1266 (NFTSISKQDF…CALVSLDSNP (168 aa)) is C-terminal hotdog fold. Asp-1171 acts as the Proton donor; for dehydratase activity in catalysis. The region spanning 2533–2610 (NNNEIIRSTI…QSIEIILSAH (78 aa)) is the Carrier domain. Position 2570 is an O-(pantetheine 4'-phosphoryl)serine (Ser-2570). The stretch at 2609–2656 (AHNNNNKNNNNNNNINNNNKNNNNNNNKNNNNINNNINNNKNNNNNNN) forms a coiled coil. The disordered stretch occupies residues 2614 to 2656 (NKNNNNNNNINNNNKNNNNNNNKNNNNINNNINNNKNNNNNNN).

The cofactor is pantetheine 4'-phosphate.

Its function is as follows. Probable polyketide synthase. The polypeptide is Probable polyketide synthase 29 (pks29) (Dictyostelium discoideum (Social amoeba)).